We begin with the raw amino-acid sequence, 552 residues long: Nucleoside-diphosphatase mig-23 (552 aa).

Residues 1-6 (MRVSLR) are Cytoplasmic-facing. Residues 7-27 (FTILAVSAMIFFPVIVFIYVV) form a helical membrane-spanning segment. At 28–489 (EAHTSPKVIA…IVKETHSSSE (462 aa)) the chain is on the lumenal side. Glu-174 (proton acceptor) is an active-site residue. Residues Asn-190 and Asn-284 are each glycosylated (N-linked (GlcNAc...) asparagine). A helical transmembrane segment spans residues 490 to 510 (SLWAPLFFLSAVFCLFVLVCA). The Cytoplasmic segment spans residues 511 to 552 (KEQSVLCFDDKRRSSFGMSRSQYSYKMLKENRTSSSFLENFA).

This sequence belongs to the GDA1/CD39 NTPase family. Expressed in body wall muscles.

The protein resides in the golgi apparatus membrane. The catalysed reaction is a ribonucleoside 5'-diphosphate + H2O = a ribonucleoside 5'-phosphate + phosphate + H(+). Seems to be able to hydrolyze ADP, UDP and GDP. Supports mig-17 glycosylation and surface expression, which is required for proper migration of distal tip cells during gonad morphogenesis. This Caenorhabditis elegans protein is Nucleoside-diphosphatase mig-23 (mig-23).